A 213-amino-acid chain; its full sequence is Ribosomal RNA small subunit methyltransferase G (213 aa).

S-adenosyl-L-methionine-binding positions include G75, F80, 128–129, and R144; that span reads IE.

The protein belongs to the methyltransferase superfamily. RNA methyltransferase RsmG family.

The protein resides in the cytoplasm. The catalysed reaction is guanosine(527) in 16S rRNA + S-adenosyl-L-methionine = N(7)-methylguanosine(527) in 16S rRNA + S-adenosyl-L-homocysteine. Specifically methylates the N7 position of guanine in position 527 of 16S rRNA. This is Ribosomal RNA small subunit methyltransferase G from Brucella anthropi (strain ATCC 49188 / DSM 6882 / CCUG 24695 / JCM 21032 / LMG 3331 / NBRC 15819 / NCTC 12168 / Alc 37) (Ochrobactrum anthropi).